Reading from the N-terminus, the 697-residue chain is MFKLFTARKHDNIWDFDGGIHPPEMKLQSSRVPMRIATLPEQLIVPLQQHLGPEGELRVSTGERVLKGQPLTVGRGRTVPVHAPTSGVITAIAPHTTAHPSGLAELCVHITPDGEDRWREQQPWADYSLRDKTALLERIHQAGIAGLGGAGFPTASKLQGGLNSVTTLIINAAECEPYITADDRLMQEHASEVVLGTQILMYLLQPQQVLIGIEDNKPEAIAALQHALRGQDEIQLRVIPTKYPSGGAKQLTKILTGKEVPFGKHSSSIGVLMQNVGTVVAIKRAIIDDEPLIERVVTLTGDALSKPGNFWARIGTPVLHLLKLAGFTPQNQPMVIMGGPLMGFTLSSLDVPIVKISNCILAPTEAEMGLSEPEQSCIRCGLCVDACPAGLLPQQLYWFSRGEEHEKARNHNLFDCIECGACAYVCPSNIPLVQYYRQEKAEIRTLDQEAERAAQAKARFEAKQARLEREKIARELRHKQAAVKLTDVDQQTVEAAVSRLARETNNTDSTISVTLGQPPDNSAVIAAREARKAQARARQVEKKLAAAEPETDAIDPRQAAVAAAIARVKAKKAAQAQLESEPVKSESEAPEEDPRKAAVAAAIARVKAKKAAQAQLESEPVKSESEAPEEDPRKAAVAAAIARVKAKKAAQAQLESEPVKSESEAPEEDPRKAAVAAAIARVKAKKAAQSASAVNPD.

4Fe-4S ferredoxin-type domains follow at residues 366-397 and 407-436; these read AEMGLSEPEQSCIRCGLCVDACPAGLLPQQLY and KARNHNLFDCIECGACAYVCPSNIPLVQYY. Positions 377, 380, 383, 387, 416, 419, 422, and 426 each coordinate [4Fe-4S] cluster. Residues 576-674 form a disordered region; it reads AQLESEPVKS…APEEDPRKAA (99 aa). Positions 581-596 are enriched in basic and acidic residues; the sequence is EPVKSESEAPEEDPRK. Positions 597 to 615 are enriched in low complexity; the sequence is AAVAAAIARVKAKKAAQAQ. Positions 619–634 are enriched in basic and acidic residues; that stretch reads EPVKSESEAPEEDPRK. A compositionally biased stretch (low complexity) spans 635–653; that stretch reads AAVAAAIARVKAKKAAQAQ. Positions 657–672 are enriched in basic and acidic residues; that stretch reads EPVKSESEAPEEDPRK.

It belongs to the 4Fe4S bacterial-type ferredoxin family. RnfC subfamily. In terms of assembly, the complex is composed of six subunits: RnfA, RnfB, RnfC, RnfD, RnfE and RnfG. Requires [4Fe-4S] cluster as cofactor.

The protein resides in the cell inner membrane. Its function is as follows. Part of a membrane-bound complex that couples electron transfer with translocation of ions across the membrane. The polypeptide is Ion-translocating oxidoreductase complex subunit C (Yersinia enterocolitica serotype O:8 / biotype 1B (strain NCTC 13174 / 8081)).